The primary structure comprises 432 residues: Glutamate-1-semialdehyde 2,1-aminomutase (432 aa).

Lys-271 is subject to N6-(pyridoxal phosphate)lysine.

Belongs to the class-III pyridoxal-phosphate-dependent aminotransferase family. HemL subfamily. Homodimer. It depends on pyridoxal 5'-phosphate as a cofactor.

The protein resides in the cytoplasm. It catalyses the reaction (S)-4-amino-5-oxopentanoate = 5-aminolevulinate. It functions in the pathway porphyrin-containing compound metabolism; protoporphyrin-IX biosynthesis; 5-aminolevulinate from L-glutamyl-tRNA(Glu): step 2/2. Its pathway is porphyrin-containing compound metabolism; chlorophyll biosynthesis. This is Glutamate-1-semialdehyde 2,1-aminomutase from Prochlorococcus marinus (strain NATL2A).